Reading from the N-terminus, the 349-residue chain is Thiamine thiazole synthase, chloroplastic (349 aa).

The transit peptide at 1-45 (MAAIASTLSLSSTKPQRLFDSSFHGSAISAAPISIGLKPRSFSVR) directs the protein to the chloroplast. Residues alanine 94, 114 to 115 (EQ), glycine 122, and alanine 187 contribute to the substrate site. Cysteine 216 is subject to 2,3-didehydroalanine (Cys). Substrate is bound by residues aspartate 218, histidine 233, methionine 285, and 295 to 297 (RMG).

Belongs to the THI4 family. Homooctamer. Interacts with RBCX1 and RBCX1. Interacts with CPK33. Fe cation is required as a cofactor. Post-translationally, during the catalytic reaction, a sulfide is transferred from Cys-216 to a reaction intermediate, generating a dehydroalanine residue. Not phosphorylated in vitro by CPK33. As to expression, expressed at high levels in chloroplast-containing parenchymatic cells of leaves, inflorescence shoots and flowers, and at lower levels in the vascular system. In young plants, detected in roots and shoots including cotyledons, leaves and hypocotyls. Also observed in apical meristematic regions, siliques and embryos. Low expression in roots, limited to the vascular tissue. Broadly expressed in roots, cotyledons, leaves, hypocotyls, inflorescences, siliques, and strongly in guard cells.

Its subcellular location is the plastid. The protein resides in the chloroplast. It localises to the mitochondrion. It is found in the cell membrane. The enzyme catalyses [ADP-thiazole synthase]-L-cysteine + glycine + NAD(+) = [ADP-thiazole synthase]-dehydroalanine + ADP-5-ethyl-4-methylthiazole-2-carboxylate + nicotinamide + 3 H2O + 2 H(+). In terms of biological role, involved in biosynthesis of the thiamine precursor thiazole. Catalyzes the conversion of NAD and glycine to adenosine diphosphate 5-(2-hydroxyethyl)-4-methylthiazole-2-carboxylic acid (ADT), an adenylated thiazole intermediate. The reaction includes an iron-dependent sulfide transfer from a conserved cysteine residue of the protein to a thiazole intermediate. The enzyme can only undergo a single turnover, which suggests it is a suicide enzyme. May have additional roles in adaptation to various stress conditions and in DNA damage tolerance. Acts as a positive regulator for the abscisic acid-induced activation of slow type anion channels during stomatal closure by repressing CPK33 kinase activity. The polypeptide is Thiamine thiazole synthase, chloroplastic (Arabidopsis thaliana (Mouse-ear cress)).